Reading from the N-terminus, the 399-residue chain is MALYCGDNFVYSQPAAAPGAPPTSRAPYGLSDYAAPPAAAANPYLWLNGPGVGGPASAASYLGAPPPPPGAAPGPFLQPPAAPGTFAGAQRGFAQPSASAPASPAGSAAPGELGWLSMASREDLMKMVRPPYSYSALIAMAIQSAPERKLTLSHIYQFVADNFPFYQRSKAGWQNSIRHNLSLNDCFKKVPRDEDDPGKGNYWTLDPNCEKMFDNGNFRRKRRRRAEASSNLTVPSGTSKSEGQSSRLRVSGKLEGDSPSSILRPSQSPEPPEGTKSTASSPGASTLTSTPCLNTFLSTFNTLNVNSSSSMGNQRTLPGSRRHLGGTQLPSSTFPNTSVPDSSPDSMQLSTVGGSNQLSSYYNPFSGGSSGDQSSPFSSPFYNFSMVNSLIYPRDGSDI.

Disordered stretches follow at residues 87–109 (AGAQ…GSAA), 221–287 (KRRR…ASTL), and 307–353 (SSSS…STVG). Over residues 96-109 (PSASAPASPAGSAA) the composition is skewed to low complexity. A phosphoserine mark is found at Ser-99 and Ser-103. The segment at residues 129 to 223 (RPPYSYSALI…DNGNFRRKRR (95 aa)) is a DNA-binding region (fork-head). The Nuclear localization signal signature appears at 219–225 (RRKRRRR). 2 stretches are compositionally biased toward polar residues: residues 228–248 (ASSN…SSRL) and 258–267 (SPSSILRPSQ). Phosphoserine is present on residues Ser-258, Ser-266, and Ser-268. Polar residues-rich tracts occupy residues 275-287 (TKST…ASTL), 307-317 (SSSSMGNQRTL), and 328-353 (QLPS…STVG). Residues 385 to 393 (SMVNSLIYP) carry the 9aaTAD motif.

Phosphorylation promotes the transcription factor activity. Dephosphorylation by protein phosphatase 2A (PP2A) reduces its activity. Specifically expressed in the epithelium in developing ectodermal appendages. Expressed in pharyngeal endoderm and ectoderm. Expressed in pre-placodal ectoderm. Down-regulated as the otic placode is induced. Expressed in teeth and hair follicles throughout embryogenesis. Expressed in mammary glands only during the earliest stages of development.

Its subcellular location is the nucleus. Functionally, transcription factor required for pharyngeal arch development, which is involved in hair, ear, jaw and dental development. May act as a pioneer transcription factor during pharyngeal arch development. Required for epithelial cell differentiation within the epidermis. Acts at multiple stages of otic placode induction: necessary for preplacodal ectoderm to execute an inner ear program. Required for hair follicle stem cell specification. Acts downstream of TBX1 for the formation of the thymus and parathyroid glands from the third pharyngeal pouch. In Mus musculus (Mouse), this protein is Forkhead box protein I3.